The following is a 353-amino-acid chain: MPLVCLADFKAHAQKQLSKTSWDFIEGEADDGITYSENIAAFKRIRLRPRYLRDMSKVDTRTTIQGQEISAPICISPTAFHSIAWPDGEKSTARAAQEANICYVISSYASYSLEDIVAAAPEGFRWFQLYMKSDWDFNKQMVQRAEALGFKALVITIDTPVLGNRRRDKRNQLNLEANILLKDLRALKEEKPTQSVPVSFPKASFCWNDLSLLQSITRLPIILKGILTKEDAELAMKHNVQGIVVSNHGGRQLDEVSASIDALREVVAAVKGKIEVYMDGGVRTGTDVLKALALGARCIFLGRPILWGLACKGEDGVKEVLDILTAELHRCMTLSGCQSVAEISPDLIQFSRL.

The 352-residue stretch at Pro-2–Leu-353 folds into the FMN hydroxy acid dehydrogenase domain. FMN contacts are provided by residues Pro-77–Ala-79, Ser-106, and Gln-128. Tyr-130 contributes to the a 2-oxocarboxylate binding site. A Phosphoserine modification is found at Ser-133. Thr-156 serves as a coordination point for FMN. Arg-165 lines the a 2-oxocarboxylate pocket. Lys-224 provides a ligand contact to FMN. His-248 (proton acceptor) is an active-site residue. An a 2-oxocarboxylate-binding site is contributed by Arg-251. Residues Asp-279 to Arg-283 and Gly-302 to Arg-303 each bind FMN. Positions Ser-351 to Leu-353 match the Microbody targeting signal motif.

Belongs to the FMN-dependent alpha-hydroxy acid dehydrogenase family. As to quaternary structure, homotetramer. Could also form homooctamer. Requires FMN as cofactor. Expressed in kidney.

The protein localises to the peroxisome. The catalysed reaction is a (2S)-2-hydroxycarboxylate + O2 = a 2-oxocarboxylate + H2O2. It catalyses the reaction 2-hydroxyoctanoate + O2 = 2-oxooctanoate + H2O2. It carries out the reaction 2-hydroxyhexadecanoate + O2 = 2-oxohexadecanoate + H2O2. The enzyme catalyses 2-hydroxyhexanoate + O2 = 2-oxohexanoate + H2O2. The catalysed reaction is mandelate + O2 = phenylglyoxylate + H2O2. Is inhibited in vitro by CCPST (4-carboxy-5-(4-chlorophenyl)sulfanyl-1,2,3-thiadiazole). Its function is as follows. Oxidase that catalyzes the oxidation of medium and long chain hydroxyacids such as 2-hydroxyhexadecanoate, 2-hydroxyoctanoate, 2-hydroxyhexanoate and 2-hydroxybutanoate, to the correspondong 2-oxoacids. Its role in the oxidation of 2-hydroxy fatty acids may contribute to the general pathway of fatty acid alpha-oxidation. Can also use mandelate as substrate. Active in vitro with the artificial electron acceptor 2,6-dichlorophenolindophenol (DCIP), but O2 is believed to be the physiological electron acceptor, leading to the production of H2O2. This Rattus norvegicus (Rat) protein is 2-Hydroxyacid oxidase 2 (Hao2).